Here is a 22-residue protein sequence, read N- to C-terminus: Chymotrypsin inhibitor (22 aa).

The tract at residues 1-22 (FDESFGFQGPSTYEKTPLGEPA) is disordered.

In terms of tissue distribution, hemolymph.

The protein resides in the secreted. Its subcellular location is the extracellular space. In terms of biological role, inhibits chymotrypsin stoichiometrically. Also inhibits porcine pancreatic elastase and trypsin. The protein is Chymotrypsin inhibitor of Mythimna unipuncta (Armyworm moth).